A 715-amino-acid chain; its full sequence is Serine/arginine repetitive matrix protein 5 (715 aa).

Positions 1–13 (MSSPKRSSKPSMS) are enriched in low complexity. Residues 1 to 715 (MSSPKRSSKP…RSSSSSSKLA (715 aa)) form a disordered region. Polar residues predominate over residues 32-59 (LKSTKSATPNRSLVPTKPATSRNSVMSP). Residues 60–79 (SSSKSTKSTSTKRAPSNRPS) are compositionally biased toward low complexity. The span at 80 to 90 (SRSRVRSKART) shows a compositional bias: basic residues. A compositionally biased stretch (polar residues) spans 92-104 (SRVSTDTRTSKAS). Positions 112-136 (HQRRGTHSRGRTPGRRGSRSSKRSP) are enriched in basic residues. 2 stretches are compositionally biased toward polar residues: residues 213 to 224 (TPSTAKCQTPTG) and 257 to 272 (YSPTEMSSRVKSYNQA). The segment covering 273–285 (STRSRPQSHSQSR) has biased composition (low complexity). The span at 286 to 320 (SPRRSRSGSQKRTHSRVRSHSWKRNHSRARSRTRK) shows a compositional bias: basic residues. Composition is skewed to basic and acidic residues over residues 359–388 (PSKERSHSHSRSSSKERDHRGSSSPRKESG) and 397–521 (KQRD…ERDH). The segment covering 522 to 536 (RRSRSPSKERQRRQS) has biased composition (basic residues). 2 stretches are compositionally biased toward basic and acidic residues: residues 539-595 (PNKE…DHSR) and 611-628 (SSKEKAHSRSRTPSKEGN). The span at 657 to 666 (TRTSSLSQNR) shows a compositional bias: polar residues. Over residues 667 to 681 (TPSKTSSHSPSTFPS) the composition is skewed to low complexity. The segment covering 682 to 715 (GGQTLSQDDSQADATTSKATLPGERSSSSSSKLA) has biased composition (polar residues).

The protein is Serine/arginine repetitive matrix protein 5 (SRRM5) of Homo sapiens (Human).